The following is a 653-amino-acid chain: Acetyl-coenzyme A synthetase (653 aa).

Residues Arg195–Lys198 and Thr314 contribute to the CoA site. Residues Gly390 to Pro392, Asp414 to Thr419, Asp505, and Arg520 contribute to the ATP site. Residue Ser528 participates in CoA binding. An ATP-binding site is contributed by Arg531. 2 residues coordinate Mg(2+): Val542 and Val547. Lys617 carries the N6-acetyllysine modification.

Belongs to the ATP-dependent AMP-binding enzyme family. Mg(2+) serves as cofactor. In terms of processing, acetylated. Deacetylation by the SIR2-homolog deacetylase activates the enzyme.

The enzyme catalyses acetate + ATP + CoA = acetyl-CoA + AMP + diphosphate. In terms of biological role, catalyzes the conversion of acetate into acetyl-CoA (AcCoA), an essential intermediate at the junction of anabolic and catabolic pathways. AcsA undergoes a two-step reaction. In the first half reaction, AcsA combines acetate with ATP to form acetyl-adenylate (AcAMP) intermediate. In the second half reaction, it can then transfer the acetyl group from AcAMP to the sulfhydryl group of CoA, forming the product AcCoA. The polypeptide is Acetyl-coenzyme A synthetase (Pasteurella multocida (strain Pm70)).